The following is a 93-amino-acid chain: MSFLGFGGGQPQLSSQQKIQAAEAELDLVTDMFNKLVNNCYKKCINTSYSEGELNKNESSCLDRCVAKYFETNVQVGENMQKMGQSFNAAGKF.

The interval 1 to 31 is interaction with transmembrane regions of transmembrane proteins in transit; that stretch reads MSFLGFGGGQPQLSSQQKIQAAEAELDLVTD. A Twin CX3C motif motif is present at residues 40-65; that stretch reads CYKKCINTSYSEGELNKNESSCLDRC. Intrachain disulfides connect cysteine 40/cysteine 65 and cysteine 44/cysteine 61. Residues 73 to 93 form a required for heterohexamerization region; it reads NVQVGENMQKMGQSFNAAGKF.

Belongs to the small Tim family. In terms of assembly, heterohexamer; composed of 3 copies of TIM9 and 3 copies of TIM10, named soluble 70 kDa complex. Associates directly with the TIM12 component of the TIM22 complex, whose core is composed of TIM18, TIM22 and TIM54. Interacts with the transmembrane regions of multi-pass transmembrane proteins in transit.

The protein localises to the mitochondrion inner membrane. The protein resides in the mitochondrion intermembrane space. Its function is as follows. Mitochondrial intermembrane chaperone that participates in the import and insertion of multi-pass transmembrane proteins into the mitochondrial inner membrane. Also required for the transfer of beta-barrel precursors from the TOM complex to the sorting and assembly machinery (SAM complex) of the outer membrane. Acts as a chaperone-like protein that protects the hydrophobic precursors from aggregation and guide them through the mitochondrial intermembrane space. Compared to TIM9, it may function as a substrate sensor. The sequence is that of Mitochondrial import inner membrane translocase subunit TIM10 (TIM10) from Saccharomyces cerevisiae (strain ATCC 204508 / S288c) (Baker's yeast).